A 459-amino-acid chain; its full sequence is Trigger factor (459 aa).

The region spanning 166–245 (GDFANIDLTA…VNSVKAEELP (80 aa)) is the PPIase FKBP-type domain.

It belongs to the FKBP-type PPIase family. Tig subfamily.

The protein localises to the cytoplasm. The catalysed reaction is [protein]-peptidylproline (omega=180) = [protein]-peptidylproline (omega=0). Functionally, involved in protein export. Acts as a chaperone by maintaining the newly synthesized protein in an open conformation. Functions as a peptidyl-prolyl cis-trans isomerase. The chain is Trigger factor from Bifidobacterium longum subsp. infantis (strain ATCC 15697 / DSM 20088 / JCM 1222 / NCTC 11817 / S12).